The sequence spans 597 residues: Indole-3-acetic acid-amido synthetase GH3.4 (597 aa).

This sequence belongs to the IAA-amido conjugating enzyme family.

Functionally, catalyzes the synthesis of indole-3-acetic acid (IAA)-amino acid conjugates, providing a mechanism for the plant to cope with the presence of excess auxin. Strongly reactive with Glu, Gln, Trp, Asp, Ala, Leu, Phe, Gly, Tyr, Met, Ile and Val. Little or no product formation with His, Ser, Thr, Arg, Lys, or Cys. Also active on pyruvic and butyric acid analogs of IAA, PAA and the synthetic auxin naphthaleneacetic acid (NAA). The two chlorinated synthetic auxin herbicides 2,4-D and 3,6-dichloro-o-anisic acid (dicamba) cannot be used as substrates. The protein is Indole-3-acetic acid-amido synthetase GH3.4 (GH3.4) of Arabidopsis thaliana (Mouse-ear cress).